The primary structure comprises 182 residues: MDCKIKAAGKNSGIFHEGGTKSSKSFLTVFIRSVFPLSPSFPAGGGIWGPMEKKPGGVGKKKGSEKKTAQGNIFFSTERDAGQEKCGILYKHCFSILYGFFWKKADKPKEKTGNGSGLGIVFPIGQKKIPEPADSDIFLPCFRYAAASDFTKAKRFLVEITAVYWVSLEAQPSSASCLFILI.

The interval 46 to 65 (GIWGPMEKKPGGVGKKKGSE) is disordered.

Its function is as follows. Multicopy expression suppresses glucose-uptake defects in various yeast mutants. This chain is Hexose transport activator protein (AHT1), found in Saccharomyces cerevisiae (strain ATCC 204508 / S288c) (Baker's yeast).